Consider the following 238-residue polypeptide: Probable rhamnogalacturonate lyase B (238 aa).

A signal peptide spans 1 to 19 (MRLRTSLGVASACASVASA). N-linked (GlcNAc...) asparagine glycosylation is found at Asn27, Asn110, and Asn143.

The protein belongs to the polysaccharide lyase 4 family.

Its subcellular location is the secreted. The catalysed reaction is Endotype eliminative cleavage of L-alpha-rhamnopyranosyl-(1-&gt;4)-alpha-D-galactopyranosyluronic acid bonds of rhamnogalacturonan I domains in ramified hairy regions of pectin leaving L-rhamnopyranose at the reducing end and 4-deoxy-4,5-unsaturated D-galactopyranosyluronic acid at the non-reducing end.. Its function is as follows. Pectinolytic enzymes consist of four classes of enzymes: pectin lyase, polygalacturonase, pectin methylesterase and rhamnogalacturonase. Degrades the rhamnogalacturonan I (RG-I) backbone of pectin. This is Probable rhamnogalacturonate lyase B (rglB) from Aspergillus oryzae (strain ATCC 42149 / RIB 40) (Yellow koji mold).